A 148-amino-acid polypeptide reads, in one-letter code: Large ribosomal subunit protein bL9 (148 aa).

This sequence belongs to the bacterial ribosomal protein bL9 family.

Binds to the 23S rRNA. This is Large ribosomal subunit protein bL9 from Geobacter metallireducens (strain ATCC 53774 / DSM 7210 / GS-15).